A 185-amino-acid chain; its full sequence is Ribosome-recycling factor (185 aa).

This sequence belongs to the RRF family.

The protein localises to the cytoplasm. Functionally, responsible for the release of ribosomes from messenger RNA at the termination of protein biosynthesis. May increase the efficiency of translation by recycling ribosomes from one round of translation to another. This Aliarcobacter butzleri (strain RM4018) (Arcobacter butzleri) protein is Ribosome-recycling factor.